Consider the following 571-residue polypeptide: Proline--tRNA ligase (571 aa).

This sequence belongs to the class-II aminoacyl-tRNA synthetase family. ProS type 1 subfamily. Homodimer.

It is found in the cytoplasm. The enzyme catalyses tRNA(Pro) + L-proline + ATP = L-prolyl-tRNA(Pro) + AMP + diphosphate. Its function is as follows. Catalyzes the attachment of proline to tRNA(Pro) in a two-step reaction: proline is first activated by ATP to form Pro-AMP and then transferred to the acceptor end of tRNA(Pro). As ProRS can inadvertently accommodate and process non-cognate amino acids such as alanine and cysteine, to avoid such errors it has two additional distinct editing activities against alanine. One activity is designated as 'pretransfer' editing and involves the tRNA(Pro)-independent hydrolysis of activated Ala-AMP. The other activity is designated 'posttransfer' editing and involves deacylation of mischarged Ala-tRNA(Pro). The misacylated Cys-tRNA(Pro) is not edited by ProRS. In Pseudomonas aeruginosa (strain UCBPP-PA14), this protein is Proline--tRNA ligase.